The following is a 531-amino-acid chain: Zinc finger CCCH-type with G patch domain-containing protein (531 aa).

Position 1 is an N-acetylmethionine (Met1). The tract at residues 91 to 133 is disordered; sequence EAPAAARGSGSETVPKAEAGPESAAGGQEEEEGEDEEELSGTK. Residues 107-117 show a composition bias toward low complexity; the sequence is AEAGPESAAGG. The segment covering 118–129 has biased composition (acidic residues); sequence QEEEEGEDEEEL. The segment at 175–201 adopts a C3H1-type zinc-finger fold; the sequence is KSLKPCPFFLEGKCRFKENCRFSHGQV. A disordered region spans residues 267–289; the sequence is PPLRTEATESDSDSDGTGDSSYA. Positions 333–379 constitute a G-patch domain; the sequence is TRGIGSRLLTKMGYEFGKGLGRHAEGRVEPIHAVVLPRGKSLDQCVE. At Ser373 the chain carries Phosphoserine. Disordered stretches follow at residues 385 to 409, 426 to 446, and 509 to 531; these read TRVG…GGRP, APGA…DMYH, and RAQE…MTEF. Residues 426 to 438 show a composition bias toward low complexity; sequence APGALEAGAAPAG. Residues 518–531 show a composition bias toward basic and acidic residues; that stretch reads EQRKADTHKKMTEF.

Interacts with CHD4/Mi-2; the interaction is direct. Ubiquitinated in case of infection by HIV-1, leading to its degradation. Ubiquitination is mediated by the CUL4A-RBX1-DDB1-DCAF1/VPRBP complex that is hijacked by HIV-1 via interaction between HIV-1 Vpr and DCAF1/VPRBP. As to expression, widely expressed.

Its subcellular location is the nucleus. Its function is as follows. Transcription repressor that specifically binds the 5'-GGAG[GA]A[GA]A-3' consensus sequence. Represses transcription by recruiting the chromatin multiprotein complex NuRD to target promoters. Negatively regulates expression of EGFR, a gene involved in cell proliferation, survival and migration. Its ability to repress genes of the EGFR pathway suggest it may act as a tumor suppressor. Able to suppress breast carcinogenesis. Functionally, antagonizes the transcription repression by isoform 1 by competing for the binding of the NuRD complex. Does not bind DNA. This is Zinc finger CCCH-type with G patch domain-containing protein (ZGPAT) from Homo sapiens (Human).